The primary structure comprises 480 residues: Phosphoglucosamine mutase (480 aa).

The tract at residues 1-41 is disordered; the sequence is MPKHTKKDPREGAPSATGEPQKQAAGRKLFGTDGVRGVANQ. Serine 127 acts as the Phosphoserine intermediate in catalysis. The Mg(2+) site is built by serine 127, aspartate 269, aspartate 271, and aspartate 273. Serine 127 is subject to Phosphoserine.

It belongs to the phosphohexose mutase family. Mg(2+) serves as cofactor. Post-translationally, activated by phosphorylation.

It catalyses the reaction alpha-D-glucosamine 1-phosphate = D-glucosamine 6-phosphate. Its function is as follows. Catalyzes the conversion of glucosamine-6-phosphate to glucosamine-1-phosphate. The protein is Phosphoglucosamine mutase of Sorangium cellulosum (strain So ce56) (Polyangium cellulosum (strain So ce56)).